We begin with the raw amino-acid sequence, 600 residues long: MTIKFLSESTINRIAAGEVIERPASVVKELVENAVDGGSTKIDIILERAGKNLIIVSDDGIGMTDKELEIAVERHTTSKLNESDFLNIHTFGFRGEALPSIAAISKMLITSKKREADKAFQIKLIGGNKQQITVSVHNEGTKIEIRDLFFATPARLKFLKSDRTELAASLDIVKKIALAHPKISFNLIHNSKNLLKLKGQNKDFETNLKQRIIDVIGDVFIKNASYINFKTPDFSICGYTSIPTYSRASSEDQFLFINNRPIKDKLLQVALRVAYQDYLARDRYALCAIFLQIDPQLVDVNVHPAKAEVRFHDPNYVRNILIEAIKNALTNKSQVTVTTTDAIELFKNPLVNKQPPINKAINVNSKASEYISFNFNRNTVCQKLTLQSDKIEQEVGKCIEHDNQSYKQYKFGIAKAQLHTTYIISQTEDSIVIIDQHAVYERLGYEKIKYCLKNGELVKQRLLIPEIVELSSGEKADYLYENRDKLFKLSLTIEKFGEKSIIVTEVPNLLRDVNVQKLIQDLADHLSDFSKNIALKELIEHVIKIYICHYSIRAVRKLSVDEMNSLLRQMENMSFSAQCNHNRPTYIELKLKDIERLFRL.

It belongs to the DNA mismatch repair MutL/HexB family.

This protein is involved in the repair of mismatches in DNA. It is required for dam-dependent methyl-directed DNA mismatch repair. May act as a 'molecular matchmaker', a protein that promotes the formation of a stable complex between two or more DNA-binding proteins in an ATP-dependent manner without itself being part of a final effector complex. The polypeptide is DNA mismatch repair protein MutL (Rickettsia typhi (strain ATCC VR-144 / Wilmington)).